Reading from the N-terminus, the 328-residue chain is DNA-directed RNA polymerase subunit alpha (328 aa).

The segment at 1-231 is alpha N-terminal domain (alpha-NTD); it reads MIQQMQMPEK…DHVRLFSLFS (231 aa). Positions 252–328 are alpha C-terminal domain (alpha-CTD); it reads MRKLLMTRIE…MEVTKYRLNQ (77 aa).

It belongs to the RNA polymerase alpha chain family. Homodimer. The RNAP catalytic core consists of 2 alpha, 1 beta, 1 beta' and 1 omega subunit. When a sigma factor is associated with the core the holoenzyme is formed, which can initiate transcription.

The catalysed reaction is RNA(n) + a ribonucleoside 5'-triphosphate = RNA(n+1) + diphosphate. Functionally, DNA-dependent RNA polymerase catalyzes the transcription of DNA into RNA using the four ribonucleoside triphosphates as substrates. In Chloroherpeton thalassium (strain ATCC 35110 / GB-78), this protein is DNA-directed RNA polymerase subunit alpha.